Consider the following 827-residue polypeptide: Multiple RNA-binding domain-containing protein 1 (827 aa).

Residues 5-78 (SRIFVKNLPP…SRISVDIAKP (74 aa)) enclose the RRM 1 domain. Disordered stretches follow at residues 77–116 (KPIADSKPQHKSPSKGSSKDADPKNAPKVLPPNTKVTAAA), 176–230 (AGLE…ATDD), and 256–299 (AASG…DPES). The span at 179-189 (EDGESDDEYED) shows a compositional bias: acidic residues. Composition is skewed to low complexity over residues 208 to 225 (APLAASAEPSESAPPVSL) and 256 to 270 (AASGSAAVSVPSTSV). Basic and acidic residues predominate over residues 277 to 288 (KPEEHPAEDSRE). 4 RRM domains span residues 308 to 384 (SRLF…PAAA), 489 to 560 (TTIL…KGPK), 599 to 682 (SSLF…ASHR), and 704 to 781 (TKLV…FAQA).

The protein belongs to the RRM MRD1 family.

It is found in the nucleus. In terms of biological role, involved in pre-rRNA processing. This Neurospora crassa (strain ATCC 24698 / 74-OR23-1A / CBS 708.71 / DSM 1257 / FGSC 987) protein is Multiple RNA-binding domain-containing protein 1 (mrd-1).